The chain runs to 86 residues: Small ribosomal subunit protein uS17 (86 aa).

It belongs to the universal ribosomal protein uS17 family. In terms of assembly, part of the 30S ribosomal subunit.

Its function is as follows. One of the primary rRNA binding proteins, it binds specifically to the 5'-end of 16S ribosomal RNA. The protein is Small ribosomal subunit protein uS17 of Streptococcus mutans serotype c (strain ATCC 700610 / UA159).